The sequence spans 282 residues: NADPH-dependent 7-cyano-7-deazaguanine reductase (282 aa).

88-90 is a substrate binding site; sequence IES. 90-91 is a binding site for NADPH; the sequence is SK. The active-site Thioimide intermediate is the Cys190. Residue Asp197 is the Proton donor of the active site. 229 to 230 serves as a coordination point for substrate; the sequence is HE. 258 to 259 serves as a coordination point for NADPH; the sequence is RG.

This sequence belongs to the GTP cyclohydrolase I family. QueF type 2 subfamily. Homodimer.

Its subcellular location is the cytoplasm. It catalyses the reaction 7-aminomethyl-7-carbaguanine + 2 NADP(+) = 7-cyano-7-deazaguanine + 2 NADPH + 3 H(+). It functions in the pathway tRNA modification; tRNA-queuosine biosynthesis. Functionally, catalyzes the NADPH-dependent reduction of 7-cyano-7-deazaguanine (preQ0) to 7-aminomethyl-7-deazaguanine (preQ1). This chain is NADPH-dependent 7-cyano-7-deazaguanine reductase, found in Escherichia coli O139:H28 (strain E24377A / ETEC).